A 169-amino-acid chain; its full sequence is MSAIIDAKKQEVDIIAEQLKNSVSTVIVDYRGLSVAEVTELRSQLREAGVEYKVLKNTMVRRAAQQAGIDGLDEFLVGPTAVATSTEDVVAPAKVIAGFAKEHQALEIKTGVMEGNVISAEEVNTVGTLPSHDGLVSMLLSVLQAPVRNFAYAVKAVGEDKESKEESAE.

The protein belongs to the universal ribosomal protein uL10 family. As to quaternary structure, part of the ribosomal stalk of the 50S ribosomal subunit. The N-terminus interacts with L11 and the large rRNA to form the base of the stalk. The C-terminus forms an elongated spine to which L12 dimers bind in a sequential fashion forming a multimeric L10(L12)X complex.

In terms of biological role, forms part of the ribosomal stalk, playing a central role in the interaction of the ribosome with GTP-bound translation factors. The chain is Large ribosomal subunit protein uL10 from Staphylococcus saprophyticus subsp. saprophyticus (strain ATCC 15305 / DSM 20229 / NCIMB 8711 / NCTC 7292 / S-41).